Here is a 383-residue protein sequence, read N- to C-terminus: Putative F-box protein At3g22650 (383 aa).

The F-box domain occupies 3–50 (SCERSLLPIDIIEEICCRIPVEYLTQFKLTCKQWFALLKDKRFIYKYL).

The polypeptide is Putative F-box protein At3g22650 (Arabidopsis thaliana (Mouse-ear cress)).